The following is a 165-amino-acid chain: Protein SprT (165 aa).

One can recognise a SprT-like domain in the interval 20–163 (EKLTQANLKL…RCVHCGEQLV (144 aa)). H78 lines the Zn(2+) pocket. E79 is a catalytic residue. H82 lines the Zn(2+) pocket.

This sequence belongs to the SprT family. The cofactor is Zn(2+).

It is found in the cytoplasm. This chain is Protein SprT, found in Escherichia coli O139:H28 (strain E24377A / ETEC).